The following is a 474-amino-acid chain: Probable fucosyltransferase 9 (474 aa).

Residues 1–21 form a helical; Signal-anchor for type II membrane protein membrane-spanning segment; that stretch reads MIKLTIAIATCLVLCLVLLLP. At 22–474 the chain is on the lumenal side; it reads SSNISYRHKY…LKLVDVSDEL (453 aa). Residues N24, N39, and N208 are each glycosylated (N-linked (GlcNAc...) asparagine).

This sequence belongs to the glycosyltransferase 37 family. In terms of tissue distribution, expressed in leaves and stems.

The protein resides in the golgi apparatus. It is found in the golgi stack membrane. Its pathway is protein modification; protein glycosylation. Functionally, may be involved in cell wall biosynthesis. May act as a fucosyltransferase. This chain is Probable fucosyltransferase 9 (FUT9), found in Arabidopsis thaliana (Mouse-ear cress).